The sequence spans 494 residues: 3-octaprenyl-4-hydroxybenzoate carboxy-lyase (494 aa).

Mn(2+) is bound at residue Asn172. Residues 175–177 (IYR), 189–191 (RWL), and 194–195 (RG) contribute to the prenylated FMN site. Position 238 (Glu238) interacts with Mn(2+). The active-site Proton donor is Asp287.

The protein belongs to the UbiD family. In terms of assembly, homohexamer. Prenylated FMN is required as a cofactor. The cofactor is Mn(2+).

It localises to the cell membrane. It carries out the reaction a 4-hydroxy-3-(all-trans-polyprenyl)benzoate + H(+) = a 2-(all-trans-polyprenyl)phenol + CO2. Its pathway is cofactor biosynthesis; ubiquinone biosynthesis. Functionally, catalyzes the decarboxylation of 3-octaprenyl-4-hydroxy benzoate to 2-octaprenylphenol, an intermediate step in ubiquinone biosynthesis. The protein is 3-octaprenyl-4-hydroxybenzoate carboxy-lyase of Shigella flexneri serotype 5b (strain 8401).